The primary structure comprises 105 residues: Large ribosomal subunit protein bL21 (105 aa).

Belongs to the bacterial ribosomal protein bL21 family. As to quaternary structure, part of the 50S ribosomal subunit. Contacts protein L20.

Its function is as follows. This protein binds to 23S rRNA in the presence of protein L20. This is Large ribosomal subunit protein bL21 from Treponema pallidum (strain Nichols).